A 226-amino-acid polypeptide reads, in one-letter code: Sugar fermentation stimulation protein homolog (226 aa).

It belongs to the SfsA family.

This is Sugar fermentation stimulation protein homolog from Ruminiclostridium cellulolyticum (strain ATCC 35319 / DSM 5812 / JCM 6584 / H10) (Clostridium cellulolyticum).